A 58-amino-acid polypeptide reads, in one-letter code: Preprotein translocase subunit SecG (58 aa).

At 1–33 (MARRKKYEGLNPFVAAGLIKFSEEGEMERIKLS) the chain is on the cytoplasmic side. A helical membrane pass occupies residues 34-55 (PKAAIAVSAAIIAALIIINLLL). The Extracellular segment spans residues 56-58 (PPL).

The protein belongs to the SEC61-beta family. In terms of assembly, component of the protein translocase complex. Heterotrimer consisting of alpha (SecY), beta (SecG) and gamma (SecE) subunits. Can form oligomers of the heterotrimer.

It localises to the cell membrane. Functionally, involved in protein export. The function of the beta subunit is unknown, but it may be involved in stabilization of the trimeric complex. In Pyrobaculum arsenaticum (strain DSM 13514 / JCM 11321 / PZ6), this protein is Preprotein translocase subunit SecG.